Reading from the N-terminus, the 47-residue chain is Exoenzymes regulatory protein AepH (47 aa).

Basic and acidic residues-rich tracts occupy residues 1–17 (MGQE…QDGH) and 33–47 (TKKE…DANV). Residues 1–47 (MGQEPKGIESRKIQDGHVRKKVGRQQGLWVRTTKKEKFSRMSRDANV) form a disordered region.

Functionally, involved in the control of extracellular enzymes production. Stimulates PEL, PEH, CEL, and PRT production. The protein is Exoenzymes regulatory protein AepH (aepH) of Pectobacterium carotovorum subsp. carotovorum (Erwinia carotovora subsp. carotovora).